The chain runs to 655 residues: Mannosyl-oligosaccharide 1,2-alpha-mannosidase IA (655 aa).

Over 1-43 (MPVGGLLPLFSSPGGGGLGSGLGGGLGGGRKGSGPAAFRLTEK) the chain is Cytoplasmic. The helical; Signal-anchor for type II membrane protein transmembrane segment at 44 to 64 (FVLLLVFSAFITLCFGAIFFL) threads the bilayer. Topologically, residues 65 to 655 (PDSSKLLSGV…QKKEIDGKEK (591 aa)) are lumenal. A disulfide bond links Cys-478 and Cys-510. Asn-515 carries an N-linked (GlcNAc...) asparagine glycan. The active-site Proton donor is Glu-524. A Ca(2+)-binding site is contributed by Thr-635.

The protein belongs to the glycosyl hydrolase 47 family. Requires Ca(2+) as cofactor. N-linked glycan at Asn-515 consists of Man(6)-GlcNAc(2).

It is found in the golgi apparatus membrane. It catalyses the reaction N(4)-(alpha-D-Man-(1-&gt;2)-alpha-D-Man-(1-&gt;2)-alpha-D-Man-(1-&gt;3)-[alpha-D-Man-(1-&gt;2)-alpha-D-Man-(1-&gt;3)-[alpha-D-Man-(1-&gt;2)-alpha-D-Man-(1-&gt;6)]-alpha-D-Man-(1-&gt;6)]-beta-D-Man-(1-&gt;4)-beta-D-GlcNAc-(1-&gt;4)-beta-D-GlcNAc)-L-asparaginyl-[protein] (N-glucan mannose isomer 9A1,2,3B1,2,3) + 4 H2O = N(4)-(alpha-D-Man-(1-&gt;3)-[alpha-D-Man-(1-&gt;3)-[alpha-D-Man-(1-&gt;6)]-alpha-D-Man-(1-&gt;6)]-beta-D-Man-(1-&gt;4)-beta-D-GlcNAc-(1-&gt;4)-beta-D-GlcNAc)-L-asparaginyl-[protein] (N-glucan mannose isomer 5A1,2) + 4 beta-D-mannose. The catalysed reaction is N(4)-(alpha-D-Man-(1-&gt;2)-alpha-D-Man-(1-&gt;2)-alpha-D-Man-(1-&gt;3)-[alpha-D-Man-(1-&gt;3)-[alpha-D-Man-(1-&gt;2)-alpha-D-Man-(1-&gt;6)]-alpha-D-Man-(1-&gt;6)]-beta-D-Man-(1-&gt;4)-beta-D-GlcNAc-(1-&gt;4)-beta-D-GlcNAc)-L-asparaginyl-[protein] (N-glucan mannose isomer 8A1,2,3B1,3) + 3 H2O = N(4)-(alpha-D-Man-(1-&gt;3)-[alpha-D-Man-(1-&gt;3)-[alpha-D-Man-(1-&gt;6)]-alpha-D-Man-(1-&gt;6)]-beta-D-Man-(1-&gt;4)-beta-D-GlcNAc-(1-&gt;4)-beta-D-GlcNAc)-L-asparaginyl-[protein] (N-glucan mannose isomer 5A1,2) + 3 beta-D-mannose. Its pathway is protein modification; protein glycosylation. Its activity is regulated as follows. Inhibited by both 1-deoxymannojirimycin and kifunensine. Functionally, involved in the maturation of Asn-linked oligosaccharides. Progressively trim alpha-1,2-linked mannose residues from Man(9)GlcNAc(2) to produce Man(5)GlcNAc(2). In Mus musculus (Mouse), this protein is Mannosyl-oligosaccharide 1,2-alpha-mannosidase IA (Man1a1).